We begin with the raw amino-acid sequence, 475 residues long: Putative poly(A) polymerase catalytic subunit (475 aa).

This sequence belongs to the poxviridae poly(A) polymerase catalytic subunit family. Highly divergent.

It localises to the virion. The catalysed reaction is RNA(n) + ATP = RNA(n)-3'-adenine ribonucleotide + diphosphate. Its function is as follows. Polymerase that creates the 3'-poly(A) tail of mRNAs. This chain is Putative poly(A) polymerase catalytic subunit, found in Ornithodoros (relapsing fever ticks).